The sequence spans 150 residues: Large-conductance mechanosensitive channel (150 aa).

2 helical membrane-spanning segments follow: residues 14 to 34 and 81 to 101; these read VIDL…VTSL and GLFI…FIVI.

It belongs to the MscL family. As to quaternary structure, homopentamer.

It localises to the cell membrane. In terms of biological role, channel that opens in response to stretch forces in the membrane lipid bilayer. May participate in the regulation of osmotic pressure changes within the cell. The sequence is that of Large-conductance mechanosensitive channel from Desulfitobacterium hafniense (strain DSM 10664 / DCB-2).